Reading from the N-terminus, the 155-residue chain is Endoribonuclease YbeY (155 aa).

H114, H118, and H124 together coordinate Zn(2+).

This sequence belongs to the endoribonuclease YbeY family. Zn(2+) serves as cofactor.

It is found in the cytoplasm. Its function is as follows. Single strand-specific metallo-endoribonuclease involved in late-stage 70S ribosome quality control and in maturation of the 3' terminus of the 16S rRNA. The sequence is that of Endoribonuclease YbeY from Erwinia tasmaniensis (strain DSM 17950 / CFBP 7177 / CIP 109463 / NCPPB 4357 / Et1/99).